The following is a 319-amino-acid chain: Acetyl-coenzyme A carboxylase carboxyl transferase subunit alpha (319 aa).

Positions 35 to 296 (NIDEEVHRLR…KAQLLEDLAD (262 aa)) constitute a CoA carboxyltransferase C-terminal domain.

The protein belongs to the AccA family. Acetyl-CoA carboxylase is a heterohexamer composed of biotin carboxyl carrier protein (AccB), biotin carboxylase (AccC) and two subunits each of ACCase subunit alpha (AccA) and ACCase subunit beta (AccD).

It is found in the cytoplasm. It catalyses the reaction N(6)-carboxybiotinyl-L-lysyl-[protein] + acetyl-CoA = N(6)-biotinyl-L-lysyl-[protein] + malonyl-CoA. Its pathway is lipid metabolism; malonyl-CoA biosynthesis; malonyl-CoA from acetyl-CoA: step 1/1. Component of the acetyl coenzyme A carboxylase (ACC) complex. First, biotin carboxylase catalyzes the carboxylation of biotin on its carrier protein (BCCP) and then the CO(2) group is transferred by the carboxyltransferase to acetyl-CoA to form malonyl-CoA. The polypeptide is Acetyl-coenzyme A carboxylase carboxyl transferase subunit alpha (Salmonella agona (strain SL483)).